The following is a 312-amino-acid chain: Glyoxylate/hydroxypyruvate reductase A (312 aa).

Arginine 227 is a catalytic residue. The active-site Proton donor is histidine 275.

The protein belongs to the D-isomer specific 2-hydroxyacid dehydrogenase family. GhrA subfamily.

It is found in the cytoplasm. The catalysed reaction is glycolate + NADP(+) = glyoxylate + NADPH + H(+). It carries out the reaction (R)-glycerate + NAD(+) = 3-hydroxypyruvate + NADH + H(+). The enzyme catalyses (R)-glycerate + NADP(+) = 3-hydroxypyruvate + NADPH + H(+). Catalyzes the NADPH-dependent reduction of glyoxylate and hydroxypyruvate into glycolate and glycerate, respectively. The protein is Glyoxylate/hydroxypyruvate reductase A of Shigella dysenteriae serotype 1 (strain Sd197).